The chain runs to 158 residues: Ecotin-like protein 2 (158 aa).

This sequence belongs to the protease inhibitor I11 (ecotin) family.

The polypeptide is Ecotin-like protein 2 (Leishmania major).